A 501-amino-acid chain; its full sequence is Zinc finger C3HC-type protein 1 (501 aa).

Ala-2 carries the post-translational modification N-acetylalanine. The tract at residues 21–73 (VVRSPEGTPQKVRELIDEGIVPEEGGTEPKDTAATFQSVDGSPQAEQSPLEST) is disordered. A Phosphoserine modification is found at Ser-24. Thr-28 is subject to Phosphothreonine. Residues 54-72 (ATFQSVDGSPQAEQSPLES) are compositionally biased toward polar residues. Phosphoserine is present on residues Ser-58, Ser-62, and Ser-68. Thr-84 carries the post-translational modification Phosphothreonine. A C3HC-type zinc finger spans residues 102–156 (CAKYGWVTVECDMLKCSSCQAFLCASLQPTFDFGRYKERCAELKKSLCSAHEKFC). The disordered stretch occupies residues 302–421 (SPIPGVEGRP…TSPRSFFDPT (120 aa)). Ser-320 and Ser-328 each carry phosphoserine. Polar residues predominate over residues 326–338 (TRSQDATVSPGSE). Thr-332 is modified (phosphothreonine). 7 positions are modified to phosphoserine: Ser-334, Ser-337, Ser-343, Ser-353, Ser-358, Ser-369, and Ser-380. Polar residues-rich tracts occupy residues 350–359 (RTRSWESSSP) and 369–383 (SPTT…SMGT). Thr-383 is subject to Phosphothreonine. Ser-394 is modified (phosphoserine). The Nuclear localization signal motif lies at 395–401 (PLRRTKR). Phosphoserine is present on residues Ser-406 and Ser-482. Over residues 406-420 (SSSSSDTSPRSFFDP) the composition is skewed to low complexity.

In terms of assembly, interacts with TPR; this interaction mediates ZC3HC1 nuclear envelopes (NE)-association but also required for proper positioning of a substantial amount of TPR at the nuclear basket (NB). Post-translationally, phosphorylated. May also be weakly phosphorylated on Tyr residues.

It localises to the nucleus. The protein resides in the nucleus envelope. Required for proper positioning of a substantial amount of TPR at the nuclear basket (NB) through interaction with TPR. The polypeptide is Zinc finger C3HC-type protein 1 (Zc3hc1) (Mus musculus (Mouse)).